We begin with the raw amino-acid sequence, 438 residues long: Cobyrinate a,c-diamide synthase (438 aa).

Residues 242-426 form the GATase cobBQ-type domain; sequence TIAIARDAAF…FHAYFSSCPA (185 aa). Cysteine 325 acts as the Nucleophile in catalysis.

Belongs to the CobB/CbiA family. Mg(2+) serves as cofactor.

The catalysed reaction is cob(II)yrinate + 2 L-glutamine + 2 ATP + 2 H2O = cob(II)yrinate a,c diamide + 2 L-glutamate + 2 ADP + 2 phosphate + 2 H(+). The protein operates within cofactor biosynthesis; adenosylcobalamin biosynthesis; cob(II)yrinate a,c-diamide from sirohydrochlorin (anaerobic route): step 10/10. In terms of biological role, catalyzes the ATP-dependent amidation of the two carboxylate groups at positions a and c of cobyrinate, using either L-glutamine or ammonia as the nitrogen source. The chain is Cobyrinate a,c-diamide synthase from Herminiimonas arsenicoxydans.